Consider the following 204-residue polypeptide: UPF0637 protein USA300HOU_1046.1 (204 aa).

Belongs to the UPF0637 family.

This is UPF0637 protein USA300HOU_1046.1 from Staphylococcus aureus (strain USA300 / TCH1516).